The sequence spans 320 residues: Aspartate carbamoyltransferase catalytic subunit (320 aa).

Residues R57 and T58 each contribute to the carbamoyl phosphate site. L-aspartate is bound at residue K85. Carbamoyl phosphate contacts are provided by R107, H141, and Q144. The L-aspartate site is built by R174 and R228. Positions 269 and 270 each coordinate carbamoyl phosphate.

This sequence belongs to the aspartate/ornithine carbamoyltransferase superfamily. ATCase family. In terms of assembly, heterododecamer (2C3:3R2) of six catalytic PyrB chains organized as two trimers (C3), and six regulatory PyrI chains organized as three dimers (R2).

It catalyses the reaction carbamoyl phosphate + L-aspartate = N-carbamoyl-L-aspartate + phosphate + H(+). Its pathway is pyrimidine metabolism; UMP biosynthesis via de novo pathway; (S)-dihydroorotate from bicarbonate: step 2/3. In terms of biological role, catalyzes the condensation of carbamoyl phosphate and aspartate to form carbamoyl aspartate and inorganic phosphate, the committed step in the de novo pyrimidine nucleotide biosynthesis pathway. The polypeptide is Aspartate carbamoyltransferase catalytic subunit (Mycobacterium marinum (strain ATCC BAA-535 / M)).